A 198-amino-acid chain; its full sequence is MDIILGIRVQDSVILASSKAVTRGISVLKDSDDKTRQLSPHTLMSFAGEAGDTVQFAEYIQANIQLYSIREDYELSPQAVSSFVRQELAKSIRSRRPYQVNVLIGGYDKKKNKPELYQIDYLGTKVELPYGAHGYSGFYTFSLLDHHYRPDMTTEEGLDLLKLCVQELEKRMPMDFKGVIVKIVDKDGIRQVDDFQAQ.

Met1 carries the post-translational modification N-acetylmethionine. The residue at position 76 (Ser76) is a Phosphoserine.

Belongs to the peptidase T1B family. In terms of assembly, the 26S proteasome consists of a 20S proteasome core and two 19S regulatory subunits. The 20S proteasome core is composed of 28 subunits that are arranged in four stacked rings, resulting in a barrel-shaped structure. The two end rings are each formed by seven alpha subunits, and the two central rings are each formed by seven beta subunits. The catalytic chamber with the active sites is on the inside of the barrel.

It localises to the cytoplasm. It is found in the nucleus. Functionally, non-catalytic component of the proteasome which degrades poly-ubiquitinated proteins in the cytoplasm and in the nucleus. It is essential for the regulated turnover of proteins and for the removal of misfolded proteins. The proteasome is a multicatalytic proteinase complex that is characterized by its ability to cleave peptides with Arg, Phe, Tyr, Leu, and Glu adjacent to the leaving group at neutral or slightly basic pH. It has an ATP-dependent proteolytic activity. This subunit has a chymotrypsin-like activity. The protein is Proteasome subunit beta type-4 (PRE1) of Saccharomyces cerevisiae (strain ATCC 204508 / S288c) (Baker's yeast).